The primary structure comprises 694 residues: Beta-mannosyltransferase 8 (694 aa).

At 1–11 (MKFPKLRKRTV) the chain is on the cytoplasmic side. The helical transmembrane segment at 12–29 (YWAVLTVFALFTIHFVFQ) threads the bilayer. Over 30–694 (YKEHNSHRVQ…YLYDHASVNS (665 aa)) the chain is Extracellular. 2 N-linked (GlcNAc...) asparagine glycosylation sites follow: N101 and N542.

It belongs to the BMT family.

Its subcellular location is the membrane. In terms of biological role, beta-mannosyltransferase involved in cell wall biosynthesis through beta-1,2-mannosylation of cell wall phosphopeptidomannan. Plays a role in the ability to produce hyphae in the presence of three bacterial species. This chain is Beta-mannosyltransferase 8 (BMT8), found in Candida albicans (strain SC5314 / ATCC MYA-2876) (Yeast).